We begin with the raw amino-acid sequence, 325 residues long: Fe-S cluster assembly protein DRE2 (325 aa).

Positions 1 to 169 are N-terminal SAM-like domain; the sequence is MTLGDRLGLI…KKKDAGNNEQ (169 aa). The interval 170–222 is linker; sequence VVKLSVEDVEDDLDDDPEVSNELLSKAKFFNSLSLNQDAEIDENNLIKSTDGD. Positions 229, 240, 243, and 245 each coordinate [2Fe-2S] cluster. Residues 229–245 are fe-S binding site A; sequence CGKTNTKKRRACKDCTC. 4 residues coordinate [4Fe-4S] cluster: C288, C291, C299, and C302. 2 short sequence motifs (cx2C motif) span residues 288 to 291 and 299 to 302; these read CGSC and CSGC. Residues 288 to 302 are fe-S binding site B; sequence CGSCSLGDAFRCSGC.

It belongs to the anamorsin family. As to quaternary structure, monomer. Interacts with TAH18. Interacts with MIA40. It depends on [2Fe-2S] cluster as a cofactor. [4Fe-4S] cluster is required as a cofactor.

It localises to the cytoplasm. The protein localises to the mitochondrion intermembrane space. Component of the cytosolic iron-sulfur (Fe-S) protein assembly (CIA) machinery required for the maturation of extramitochondrial Fe-S proteins. Part of an electron transfer chain functioning in an early step of cytosolic Fe-S biogenesis, facilitating the de novo assembly of a [4Fe-4S] cluster on the scaffold complex CFD1-NBP35. Electrons are transferred to DRE2 from NADPH via the FAD- and FMN-containing protein TAH18. TAH18-DRE2 are also required for the assembly of the diferric tyrosyl radical cofactor of ribonucleotide reductase (RNR), probably by providing electrons for reduction during radical cofactor maturation in the catalytic small subunit RNR2. The protein is Fe-S cluster assembly protein DRE2 of Vanderwaltozyma polyspora (strain ATCC 22028 / DSM 70294 / BCRC 21397 / CBS 2163 / NBRC 10782 / NRRL Y-8283 / UCD 57-17) (Kluyveromyces polysporus).